The sequence spans 90 residues: Small ribosomal subunit protein uS15 (90 aa).

It belongs to the universal ribosomal protein uS15 family. In terms of assembly, part of the 30S ribosomal subunit. Forms a bridge to the 50S subunit in the 70S ribosome, contacting the 23S rRNA.

One of the primary rRNA binding proteins, it binds directly to 16S rRNA where it helps nucleate assembly of the platform of the 30S subunit by binding and bridging several RNA helices of the 16S rRNA. Functionally, forms an intersubunit bridge (bridge B4) with the 23S rRNA of the 50S subunit in the ribosome. This chain is Small ribosomal subunit protein uS15, found in Helicobacter pylori (strain Shi470).